The primary structure comprises 294 residues: Cytidine deaminase (294 aa).

CMP/dCMP-type deaminase domains lie at 48–168 (DDNT…FGPN) and 187–294 (ETTD…YYTF). Substrate is bound at residue 89-91 (NME). Position 102 (His102) interacts with Zn(2+). Catalysis depends on Glu104, which acts as the Proton donor. Positions 129 and 132 each coordinate Zn(2+).

Belongs to the cytidine and deoxycytidylate deaminase family. Homodimer. It depends on Zn(2+) as a cofactor.

The enzyme catalyses cytidine + H2O + H(+) = uridine + NH4(+). It carries out the reaction 2'-deoxycytidine + H2O + H(+) = 2'-deoxyuridine + NH4(+). In terms of biological role, this enzyme scavenges exogenous and endogenous cytidine and 2'-deoxycytidine for UMP synthesis. In Photorhabdus laumondii subsp. laumondii (strain DSM 15139 / CIP 105565 / TT01) (Photorhabdus luminescens subsp. laumondii), this protein is Cytidine deaminase.